Consider the following 430-residue polypeptide: Dihydrolipoyllysine-residue acetyltransferase component of pyruvate dehydrogenase complex (430 aa).

Residues 2–77 (AFEFRLPDIG…VVGDVIVKID (76 aa)) form the Lipoyl-binding domain. The residue at position 43 (Lys-43) is an N6-lipoyllysine. The tract at residues 80 to 122 (DAEDMQFKGHDDDSSSKEEPAKEEAPAEQAPVATQTEEVDENR) is disordered. A compositionally biased stretch (basic and acidic residues) spans 84–104 (MQFKGHDDDSSSKEEPAKEEA). The Peripheral subunit-binding (PSBD) domain occupies 125–162 (KAMPSVRKYAREKGVNIKAVSGSGKNGRITKEDVDAYL). A disordered region spans residues 165 to 199 (GAPTASNESAASATNEEVAETPAAPAAVSLEGDFP). Residues 168 to 192 (TASNESAASATNEEVAETPAAPAAV) are compositionally biased toward low complexity. Residue His-401 is part of the active site.

Belongs to the 2-oxoacid dehydrogenase family. Forms a 24-polypeptide structural core with octahedral symmetry. Requires (R)-lipoate as cofactor.

The catalysed reaction is N(6)-[(R)-dihydrolipoyl]-L-lysyl-[protein] + acetyl-CoA = N(6)-[(R)-S(8)-acetyldihydrolipoyl]-L-lysyl-[protein] + CoA. Functionally, the pyruvate dehydrogenase complex catalyzes the overall conversion of pyruvate to acetyl-CoA and CO(2). It contains multiple copies of three enzymatic components: pyruvate dehydrogenase (E1), dihydrolipoamide acetyltransferase (E2) and lipoamide dehydrogenase (E3). This Staphylococcus aureus (strain MRSA252) protein is Dihydrolipoyllysine-residue acetyltransferase component of pyruvate dehydrogenase complex (pdhC).